Consider the following 690-residue polypeptide: Protein arginine N-methyltransferase 7 (690 aa).

2 SAM-dependent MTase PRMT-type domains span residues 14–357 and 366–690; these read QNSW…YSLW and TKSV…QKKL.

This sequence belongs to the class I-like SAM-binding methyltransferase superfamily. Protein arginine N-methyltransferase family. PRMT7 subfamily.

In terms of biological role, essential arginine methyltransferase that can both catalyze the formation of omega-N monomethylarginine (MMA) and symmetrical dimethylarginine (sDMA). Specifically mediates the symmetrical dimethylation of arginine residues in the small nuclear ribonucleoproteins SmD1 and SmD3. This is Protein arginine N-methyltransferase 7 (Art7) from Drosophila yakuba (Fruit fly).